The chain runs to 374 residues: Eukaryotic translation initiation factor 3 subunit M (374 aa).

The PCI domain maps to T180–H339.

The protein belongs to the eIF-3 subunit M family. In terms of assembly, component of the eukaryotic translation initiation factor 3 (eIF-3) complex, which is composed of 13 subunits: EIF3A, EIF3B, EIF3C, EIF3D, EIF3E, EIF3F, EIF3G, EIF3H, EIF3I, EIF3J, EIF3K, EIF3L and EIF3M.

The protein resides in the cytoplasm. In terms of biological role, component of the eukaryotic translation initiation factor 3 (eIF-3) complex, which is involved in protein synthesis of a specialized repertoire of mRNAs and, together with other initiation factors, stimulates binding of mRNA and methionyl-tRNAi to the 40S ribosome. The eIF-3 complex specifically targets and initiates translation of a subset of mRNAs involved in cell proliferation. The protein is Eukaryotic translation initiation factor 3 subunit M of Gallus gallus (Chicken).